We begin with the raw amino-acid sequence, 201 residues long: Ras-related protein Rab-5A (201 aa).

GTP is bound by residues 16–24 (GEAAVGKSS), 35–41 (LDYQEST), 64–68 (DTAGQ), 122–125 (NKLD), and 152–154 (SAK). The short motif at 38-46 (QESTIGAAF) is the Effector region element. Residues C199 and C200 are each lipidated (S-geranylgeranyl cysteine).

It belongs to the small GTPase superfamily. Rab family.

It is found in the cell membrane. It localises to the endosome membrane. With respect to regulation, regulated by guanine nucleotide exchange factors (GEFs) which promote the exchange of bound GDP for free GTP. Required for the fusion of plasma membranes and early endosomes. This Dictyostelium discoideum (Social amoeba) protein is Ras-related protein Rab-5A (rab5A).